Reading from the N-terminus, the 466-residue chain is tRNA-2-methylthio-N(6)-dimethylallyladenosine synthase (466 aa).

One can recognise an MTTase N-terminal domain in the interval 21–137; it reads GSYWITTFGC…LEDLLNQVDN (117 aa). [4Fe-4S] cluster-binding residues include Cys30, Cys66, Cys100, Cys172, Cys176, and Cys179. A Radical SAM core domain is found at 158–395; that stretch reads RDSNICAWVN…NLLVEQTAKD (238 aa). The TRAM domain maps to 398 to 466; sequence TRYHNQIVEV…AFSLTGSPIQ (69 aa).

This sequence belongs to the methylthiotransferase family. MiaB subfamily. As to quaternary structure, monomer. It depends on [4Fe-4S] cluster as a cofactor.

The protein resides in the cytoplasm. It catalyses the reaction N(6)-dimethylallyladenosine(37) in tRNA + (sulfur carrier)-SH + AH2 + 2 S-adenosyl-L-methionine = 2-methylsulfanyl-N(6)-dimethylallyladenosine(37) in tRNA + (sulfur carrier)-H + 5'-deoxyadenosine + L-methionine + A + S-adenosyl-L-homocysteine + 2 H(+). Functionally, catalyzes the methylthiolation of N6-(dimethylallyl)adenosine (i(6)A), leading to the formation of 2-methylthio-N6-(dimethylallyl)adenosine (ms(2)i(6)A) at position 37 in tRNAs that read codons beginning with uridine. This Prochlorococcus marinus (strain SARG / CCMP1375 / SS120) protein is tRNA-2-methylthio-N(6)-dimethylallyladenosine synthase.